A 158-amino-acid chain; its full sequence is Transcription elongation factor GreA (158 aa).

It belongs to the GreA/GreB family.

Functionally, necessary for efficient RNA polymerase transcription elongation past template-encoded arresting sites. The arresting sites in DNA have the property of trapping a certain fraction of elongating RNA polymerases that pass through, resulting in locked ternary complexes. Cleavage of the nascent transcript by cleavage factors such as GreA or GreB allows the resumption of elongation from the new 3'terminus. GreA releases sequences of 2 to 3 nucleotides. The polypeptide is Transcription elongation factor GreA (Psychrobacter arcticus (strain DSM 17307 / VKM B-2377 / 273-4)).